Here is a 692-residue protein sequence, read N- to C-terminus: DNA topoisomerase 4 subunit B (692 aa).

ATP-binding positions include tyrosine 53, asparagine 93, aspartate 120, 162-168 (GLHGVGI), and lysine 393. The region spanning 473 to 587 (AELFIVEGDS…AGHLYLAVPP (115 aa)) is the Toprim domain. Residues glutamate 479, aspartate 552, and aspartate 554 each coordinate Mg(2+).

It belongs to the type II topoisomerase family. ParE type 1 subfamily. In terms of assembly, heterotetramer composed of ParC and ParE. It depends on Mg(2+) as a cofactor. Requires Mn(2+) as cofactor. Ca(2+) is required as a cofactor.

The enzyme catalyses ATP-dependent breakage, passage and rejoining of double-stranded DNA.. In terms of biological role, topoisomerase IV is essential for chromosome segregation. It relaxes supercoiled DNA. Performs the decatenation events required during the replication of a circular DNA molecule. This Bartonella bacilliformis (strain ATCC 35685 / KC583 / Herrer 020/F12,63) protein is DNA topoisomerase 4 subunit B.